The primary structure comprises 406 residues: Phosphopentomutase (406 aa).

Residues D10, D305, H310, D346, H347, and H358 each coordinate Mn(2+).

The protein belongs to the phosphopentomutase family. The cofactor is Mn(2+).

It is found in the cytoplasm. The catalysed reaction is 2-deoxy-alpha-D-ribose 1-phosphate = 2-deoxy-D-ribose 5-phosphate. It carries out the reaction alpha-D-ribose 1-phosphate = D-ribose 5-phosphate. It participates in carbohydrate degradation; 2-deoxy-D-ribose 1-phosphate degradation; D-glyceraldehyde 3-phosphate and acetaldehyde from 2-deoxy-alpha-D-ribose 1-phosphate: step 1/2. Functionally, isomerase that catalyzes the conversion of deoxy-ribose 1-phosphate (dRib-1-P) and ribose 1-phosphate (Rib-1-P) to deoxy-ribose 5-phosphate (dRib-5-P) and ribose 5-phosphate (Rib-5-P), respectively. The protein is Phosphopentomutase of Rhizobium etli (strain ATCC 51251 / DSM 11541 / JCM 21823 / NBRC 15573 / CFN 42).